The following is a 741-amino-acid chain: Endoplasmic reticulum membrane sensor NFE2L1 (741 aa).

Residues 7-24 (YLTEGLLQFTILLSLIGV) traverse the membrane as a helical; Signal-anchor for type II membrane protein segment. Disordered stretches follow at residues 108 to 148 (DPEG…TEQG) and 198 to 220 (QKEQDVDKELQDGREREDTWSGE). Over residues 113-131 (VSGSQPNSGLALESSSGLQ) the composition is skewed to polar residues. The tract at residues 191–199 (VFDYSHRQK) is cholesterol recognition/amino acid consensus (CRAC) region. Basic and acidic residues predominate over residues 198-216 (QKEQDVDKELQDGREREDT). N-linked (GlcNAc...) asparagine glycans are attached at residues Asn319 and Asn331. Residues 350 to 354 (SPEVE) form a CPD region. Asn394 carries an N-linked (GlcNAc...) asparagine glycan. 2 disordered regions span residues 441–501 (EEEF…DSET) and 551–582 (SALDSADLPPPSTLKKGSKEKQADFLDKQMSR). Residues 447-451 (DSGLS) carry the Destruction motif motif. Over residues 447-492 (DSGLSLDSSHSPSSLSSSEGSSSSSSSSSSSSASSSASSSFSEEGA) the composition is skewed to low complexity. A Phosphoserine; by CK2 modification is found at Ser497. Residues 567 to 582 (GSKEKQADFLDKQMSR) are compositionally biased toward basic and acidic residues. The residue at position 568 (Ser568) is a Phosphoserine. In terms of domain architecture, bZIP spans 623–686 (LIRDIRRRGK…RQMKQKVQSL (64 aa)). The segment at 625-644 (RDIRRRGKNKMAAQNCRKRK) is basic motif. The leucine-zipper stretch occupies residues 651 to 665 (LERDVEDLQRDKARL). The interval 722 to 741 (RTMADQQARRQERKPKDRRK) is disordered. A Nuclear localization signal motif is present at residues 730–737 (RRQERKPK). Residues 732–741 (QERKPKDRRK) show a composition bias toward basic residues.

It belongs to the bZIP family. CNC subfamily. In terms of assembly, interacts with KEAP1. As to quaternary structure, interacts (via CPD region) with FBXW7; leading to its ubiquitination and degradation. Interacts with SYVN1/HRD1; leading to its ubiquitination and degradation. Interacts (when ubiquitinated) with DDI2; leading to its cleavage. Interacts (via the bZIP domain) with small MAF protein (MAFF, MAFG or MAFK); required for binding to antioxidant response elements (AREs) on DNA. Interacts (via Destruction motif) with BTRC; leading to its ubiquitination and degradation. Interacts with CEBPB; the heterodimer represses expression of DSPP during odontoblast differentiation. Interacts with MOTS-c, a peptide produced by the mitochondrially encoded 12S rRNA MT-RNR1. In terms of processing, cleaved at Leu-104 by the aspartyl protease DDI2 following retrotranslocation, releasing the protein from the endoplasmic reticulum membrane and forming the transcription factor NRF1 that translocates into the nucleus. Ubiquitination is prerequisite for cleavage by aspartyl protease DDI2. N-glycosylated in normal conditions, when it has a single-pass type II membrane protein topology, with the DNA-binding domain facing the endoplasmic reticulum lumen. Deglycosylated during retrotranslocation to the cytosolic side of the membrane, to have a single-pass type III membrane protein topology with the major part of the protein facing the cytosol. Post-translationally, ubiquitinated by the SCF(FBXW7) complex and SYVN1/HRD1, leading to its degradation by the proteasome. Ubiquitinated during retrotranslocation to the cytosolic side of the membrane: ubiquitination does not lead to degradation and is required for processing by the aspartyl protease DDI2 and subsequent release from the endoplasmic reticulum membrane. In terms of processing, phosphorylation by CK2 at Ser-497 inhibits transcription factor activity, possibly by affecting DNA-binding activity. Phosphorylation at Ser-568 is required for interaction with CEBPB. Ubiquitinated by the SCF(BTRC) complex in the nucleus, leading to its degradation by the proteasome. As to expression, isoform 1: Widely expressed including kidney, brown fat, white fat, large intestine, small intestine, stomach, lung, brain and liver. Isoform 1: Expressed in mouse embryonic fibroblasts (MEF). Isoform 2: Widely expressed including kidney, brown fat, white fat, large intestine, small intestine, stomach, lung, brain and liver. Isoform 2: levels in white fat, lung and liver are increased compared to isoform 1 (at protein level). Isoform 2: levels are elevated in brown fat and brain, but are reduced in liver compared to isoform 1 levels. Isoform 2: Expressed in mouse embryonic fibroblasts (MEF).

It is found in the endoplasmic reticulum membrane. The protein localises to the nucleus. It localises to the cytoplasm. Endoplasmic reticulum membrane sensor that translocates into the nucleus in response to various stresses to act as a transcription factor. Constitutes a precursor of the transcription factor NRF1. Able to detect various cellular stresses, such as cholesterol excess, oxidative stress or proteasome inhibition. In response to stress, it is released from the endoplasmic reticulum membrane following cleavage by the protease DDI2 and translocates into the nucleus to form the transcription factor NRF1. Acts as a key sensor of cholesterol excess: in excess cholesterol conditions, the endoplasmic reticulum membrane form of the protein directly binds cholesterol via its CRAC motif, preventing cleavage and release of the transcription factor NRF1, thereby allowing expression of genes promoting cholesterol removal, such as CD36. Involved in proteasome homeostasis: in response to proteasome inhibition, it is released from the endoplasmic reticulum membrane, translocates to the nucleus and activates expression of genes encoding proteasome subunits. Functionally, CNC-type bZIP family transcription factor that translocates to the nucleus and regulates expression of target genes in response to various stresses. Heterodimerizes with small-Maf proteins (MAFF, MAFG or MAFK) and binds DNA motifs including the antioxidant response elements (AREs), which regulate expression of genes involved in oxidative stress response. Activates or represses expression of target genes, depending on the context. Plays a key role in cholesterol homeostasis by acting as a sensor of cholesterol excess: in low cholesterol conditions, translocates into the nucleus and represses expression of genes involved in defense against cholesterol excess, such as CD36. In excess cholesterol conditions, the endoplasmic reticulum membrane form of the protein directly binds cholesterol via its CRAC motif, preventing cleavage and release of the transcription factor NRF1, thereby allowing expression of genes promoting cholesterol removal. Critical for redox balance in response to oxidative stress: acts by binding the AREs motifs on promoters and mediating activation of oxidative stress response genes, such as GCLC, GCLM, GSS, MT1 and MT2. Plays an essential role during fetal liver hematopoiesis: probably has a protective function against oxidative stress and is involved in lipid homeostasis in the liver. Involved in proteasome homeostasis: in response to proteasome inhibition, mediates the 'bounce-back' of proteasome subunits by translocating into the nucleus and activating expression of genes encoding proteasome subunits. Also involved in regulating glucose flux. Together with CEBPB; represses expression of DSPP during odontoblast differentiation. In response to ascorbic acid induction, activates expression of SP7/Osterix in osteoblasts. Its function is as follows. Transcription factor that binds the antioxidant response elements (ARE) consensus sequence on promoters and activates their expression. In terms of biological role, transcription factor that binds the extended kappa 3 site of the TNF-alpha promoter after Fc gamma RIII stimulation and participates in the induction of this cytokine. This Mus musculus (Mouse) protein is Endoplasmic reticulum membrane sensor NFE2L1.